The following is a 591-amino-acid chain: Proteasome-associated ATPase (591 aa).

Positions 8-77 (DSVAAARELE…LREEVDRLGQ (70 aa)) form a coiled coil. Residue 278 to 283 (GCGKTL) coordinates ATP. A docks into pockets in the proteasome alpha-ring region spans residues 590–591 (YL).

It belongs to the AAA ATPase family. In terms of assembly, homohexamer. Assembles into a hexameric ring structure that caps the 20S proteasome core. Strongly interacts with the prokaryotic ubiquitin-like protein Pup through a hydrophobic interface; the interacting region of ARC lies in its N-terminal coiled-coil domain. There is one Pup binding site per ARC hexamer ring. Upon ATP-binding, the C-terminus of ARC interacts with the alpha-rings of the proteasome core, possibly by binding to the intersubunit pockets.

It functions in the pathway protein degradation; proteasomal Pup-dependent pathway. Functionally, ATPase which is responsible for recognizing, binding, unfolding and translocation of pupylated proteins into the bacterial 20S proteasome core particle. May be essential for opening the gate of the 20S proteasome via an interaction with its C-terminus, thereby allowing substrate entry and access to the site of proteolysis. Thus, the C-termini of the proteasomal ATPase may function like a 'key in a lock' to induce gate opening and therefore regulate proteolysis. This is Proteasome-associated ATPase from Rhodococcus jostii (strain RHA1).